We begin with the raw amino-acid sequence, 126 residues long: Large ribosomal subunit protein bL21 (126 aa).

The disordered stretch occupies residues 105 to 126; sequence KKPSVGPRAKRTKAAPAAEAAE.

As to quaternary structure, contacts protein L20. Part of the 50S ribosomal subunit.

Its function is as follows. This protein binds to 23S rRNA in the presence of protein L20. This is Large ribosomal subunit protein bL21 from Rhodopseudomonas palustris (strain ATCC BAA-98 / CGA009).